Consider the following 432-residue polypeptide: D-amino acid dehydrogenase (432 aa).

3 to 17 (VVILGSGVVGVTSAW) lines the FAD pocket.

The protein belongs to the DadA oxidoreductase family. It depends on FAD as a cofactor.

The enzyme catalyses a D-alpha-amino acid + A + H2O = a 2-oxocarboxylate + AH2 + NH4(+). It participates in amino-acid degradation; D-alanine degradation; NH(3) and pyruvate from D-alanine: step 1/1. In terms of biological role, oxidative deamination of D-amino acids. This chain is D-amino acid dehydrogenase, found in Citrobacter koseri (strain ATCC BAA-895 / CDC 4225-83 / SGSC4696).